The chain runs to 1002 residues: Isoleucine--tRNA ligase (1002 aa).

Residues 70-80 (PYANGNIHIGH) carry the 'HIGH' region motif. Glu-630 is a binding site for L-isoleucyl-5'-AMP. The 'KMSKS' region signature appears at 671-675 (KMSKS). ATP is bound at residue Lys-674.

Belongs to the class-I aminoacyl-tRNA synthetase family. IleS type 1 subfamily. In terms of assembly, monomer.

It localises to the cytoplasm. It catalyses the reaction tRNA(Ile) + L-isoleucine + ATP = L-isoleucyl-tRNA(Ile) + AMP + diphosphate. Its function is as follows. Catalyzes the attachment of isoleucine to tRNA(Ile). As IleRS can inadvertently accommodate and process structurally similar amino acids such as valine, to avoid such errors it has two additional distinct tRNA(Ile)-dependent editing activities. One activity is designated as 'pretransfer' editing and involves the hydrolysis of activated Val-AMP. The other activity is designated 'posttransfer' editing and involves deacylation of mischarged Val-tRNA(Ile). This chain is Isoleucine--tRNA ligase, found in Bradyrhizobium diazoefficiens (strain JCM 10833 / BCRC 13528 / IAM 13628 / NBRC 14792 / USDA 110).